The sequence spans 302 residues: L-aminoadipate-semialdehyde dehydrogenase-phosphopantetheinyl transferase (302 aa).

Residues R44, 83–88, and 105–108 contribute to the CoA site; these read RTGKGK and NVSH. The Mg(2+) site is built by D126 and E178. 178-182 is a binding site for CoA; that stretch reads ESFIK.

The protein belongs to the P-Pant transferase superfamily. AcpS family. In terms of assembly, monomer. The cofactor is Mg(2+).

Its subcellular location is the cytoplasm. It is found in the cytosol. The enzyme catalyses apo-[ACP] + CoA = holo-[ACP] + adenosine 3',5'-bisphosphate + H(+). The catalysed reaction is apo-[ACP] + acetyl-CoA = acetyl-[ACP] + adenosine 3',5'-bisphosphate + H(+). In terms of biological role, catalyzes the post-translational modification of target proteins by phosphopantetheine. Can transfer the 4'-phosphopantetheine moiety from coenzyme A, regardless of whether the CoA is presented in the free thiol form or as an acetyl thioester, to a serine residue of a broad range of acceptors. This chain is L-aminoadipate-semialdehyde dehydrogenase-phosphopantetheinyl transferase (aasdhppt), found in Xenopus laevis (African clawed frog).